Here is a 355-residue protein sequence, read N- to C-terminus: DNA-directed RNA polymerase subunit alpha (355 aa).

Residues 1 to 248 are alpha N-terminal domain (alpha-NTD); it reads MYYNNDVSLC…EQLQPFISSD (248 aa). An alpha C-terminal domain (alpha-CTD) region spans residues 267–355; sequence YDPVLLRKVD…ELAKQHTDED (89 aa).

Belongs to the RNA polymerase alpha chain family. Homodimer. The RNAP catalytic core consists of 2 alpha, 1 beta, 1 beta' and 1 omega subunit. When a sigma factor is associated with the core the holoenzyme is formed, which can initiate transcription.

It catalyses the reaction RNA(n) + a ribonucleoside 5'-triphosphate = RNA(n+1) + diphosphate. In terms of biological role, DNA-dependent RNA polymerase catalyzes the transcription of DNA into RNA using the four ribonucleoside triphosphates as substrates. This chain is DNA-directed RNA polymerase subunit alpha, found in Wolbachia pipientis wMel.